The primary structure comprises 360 residues: Phospho-N-acetylmuramoyl-pentapeptide-transferase (360 aa).

At Met1–Arg25 the chain is on the periplasmic side. Residues Ala26–Ala46 form a helical membrane-spanning segment. The Cytoplasmic portion of the chain corresponds to His47–Thr71. A helical membrane pass occupies residues Pro72–Tyr92. A topological domain (periplasmic) is located at residue Pro93. A helical membrane pass occupies residues Ser94–Val114. At Asp115–Arg131 the chain is on the cytoplasmic side. A helical transmembrane segment spans residues Trp132–Gly152. Over Lys153 to Asp167 the chain is Periplasmic. Residues Val168–Gly188 form a helical membrane-spanning segment. Over Asn189 to Asp198 the chain is Cytoplasmic. A helical transmembrane segment spans residues Gly199–Thr219. Residues Gly220 to His235 are Periplasmic-facing. A helical transmembrane segment spans residues Ala236 to Phe256. The Cytoplasmic segment spans residues Asn257–Gln262. Residues Val263 to Leu283 form a helical membrane-spanning segment. The Periplasmic segment spans residues Leu284–Glu287. Residues Phe288–Val308 form a helical membrane-spanning segment. Over Gly309–Arg337 the chain is Cytoplasmic. The helical transmembrane segment at Val338–Lys358 threads the bilayer. The Periplasmic segment spans residues Val359–Arg360.

Belongs to the glycosyltransferase 4 family. MraY subfamily. The cofactor is Mg(2+).

It is found in the cell inner membrane. The catalysed reaction is UDP-N-acetyl-alpha-D-muramoyl-L-alanyl-gamma-D-glutamyl-meso-2,6-diaminopimeloyl-D-alanyl-D-alanine + di-trans,octa-cis-undecaprenyl phosphate = di-trans,octa-cis-undecaprenyl diphospho-N-acetyl-alpha-D-muramoyl-L-alanyl-D-glutamyl-meso-2,6-diaminopimeloyl-D-alanyl-D-alanine + UMP. The protein operates within cell wall biogenesis; peptidoglycan biosynthesis. Functionally, catalyzes the initial step of the lipid cycle reactions in the biosynthesis of the cell wall peptidoglycan: transfers peptidoglycan precursor phospho-MurNAc-pentapeptide from UDP-MurNAc-pentapeptide onto the lipid carrier undecaprenyl phosphate, yielding undecaprenyl-pyrophosphoryl-MurNAc-pentapeptide, known as lipid I. The polypeptide is Phospho-N-acetylmuramoyl-pentapeptide-transferase (Shigella boydii serotype 18 (strain CDC 3083-94 / BS512)).